A 769-amino-acid polypeptide reads, in one-letter code: Homoaconitase, mitochondrial (769 aa).

The N-terminal 28 residues, 1–28 (MQSRLLPSGPGRRWISLRVPNTPQRRAF), are a transit peptide targeting the mitochondrion. The [4Fe-4S] cluster site is built by Cys391, Cys460, and Cys463.

The protein belongs to the aconitase/IPM isomerase family. It depends on [4Fe-4S] cluster as a cofactor.

It localises to the mitochondrion. The catalysed reaction is (2R,3S)-homoisocitrate = cis-homoaconitate + H2O. It functions in the pathway amino-acid biosynthesis; L-lysine biosynthesis via AAA pathway; L-alpha-aminoadipate from 2-oxoglutarate: step 3/5. Functionally, catalyzes the reversible hydration of cis-homoaconitate to (2R,3S)-homoisocitrate, a step in the alpha-aminoadipate pathway for lysine biosynthesis. This Aspergillus niger (strain ATCC MYA-4892 / CBS 513.88 / FGSC A1513) protein is Homoaconitase, mitochondrial (lysA).